The primary structure comprises 37 residues: Large ribosomal subunit protein bL36 (37 aa).

Belongs to the bacterial ribosomal protein bL36 family.

This is Large ribosomal subunit protein bL36 from Listeria innocua serovar 6a (strain ATCC BAA-680 / CLIP 11262).